The chain runs to 443 residues: Probable 26S proteasome regulatory subunit 4 (443 aa).

The tract at residues 1 to 53 is disordered; the sequence is MGQQQSGFGGRGNDRGAGDGEKKEKKKYEAPIPSRIGKKKKGSKGPDAASKLP. Over residues 12-29 the composition is skewed to basic and acidic residues; the sequence is GNDRGAGDGEKKEKKKYE. 229–236 lines the ATP pocket; sequence GCPGTGKT.

The protein belongs to the AAA ATPase family.

The protein localises to the cytoplasm. It is found in the nucleus. The 26S proteasome is involved in the ATP-dependent degradation of ubiquitinated proteins. The regulatory (or ATPase) complex confers ATP dependency and substrate specificity to the 26S complex. May play a role in the degradation of microtubule severing protein mei-1. The polypeptide is Probable 26S proteasome regulatory subunit 4 (rpt-2) (Caenorhabditis elegans).